The chain runs to 140 residues: Large ribosomal subunit protein uL11 (140 aa).

This sequence belongs to the universal ribosomal protein uL11 family. In terms of assembly, part of the ribosomal stalk of the 50S ribosomal subunit. Interacts with L10 and the large rRNA to form the base of the stalk. L10 forms an elongated spine to which L12 dimers bind in a sequential fashion forming a multimeric L10(L12)X complex. One or more lysine residues are methylated.

Forms part of the ribosomal stalk which helps the ribosome interact with GTP-bound translation factors. This chain is Large ribosomal subunit protein uL11, found in Dehalococcoides mccartyi (strain ATCC BAA-2100 / JCM 16839 / KCTC 5957 / BAV1).